The following is a 46-amino-acid chain: Cystatin WCPI-3 (46 aa).

Positions 35-38 match the Secondary area of contact motif; it reads VVAG.

It belongs to the cystatin family. Phytocystatin subfamily.

Inhibitor of papain. This Wisteria floribunda (Japanese wisteria) protein is Cystatin WCPI-3.